The chain runs to 808 residues: DNA replication licensing factor MCM3 (808 aa).

Ala-2 is subject to N-acetylalanine. A phosphoserine mark is found at Ser-160 and Ser-275. N6-acetyllysine is present on Lys-293. The MCM domain occupies 295 to 502 (IFDQLARSLA…QDREISDHVL (208 aa)). ADP-binding residues include Gln-353, Leu-393, Glu-394, Ala-395, and Ala-397. The short motif at 477 to 480 (SRFD) is the Arginine finger element. Ala-523 contributes to the ATP binding site. Ser-535 carries the phosphoserine; by ATM modification. An N6-acetyllysine modification is found at Lys-547. Ser-611 is subject to Phosphoserine. Residues 662–739 (KKRKKRSEDE…ETKESQKVEL (78 aa)) are disordered. An ATP-binding site is contributed by Arg-664. Phosphoserine is present on residues Ser-668, Ser-672, and Ser-681. The span at 679–688 (EKSQEDQEQK) shows a compositional bias: basic and acidic residues. Tyr-708 bears the Phosphotyrosine mark. Phosphothreonine is present on residues Thr-713 and Thr-722. Positions 727–739 (DSQETKESQKVEL) are enriched in basic and acidic residues. Ser-728 and Ser-734 each carry phosphoserine.

This sequence belongs to the MCM family. As to quaternary structure, component of the MCM2-7 complex. The complex forms a toroidal hexameric ring with the proposed subunit order MCM2-MCM6-MCM4-MCM7-MCM3-MCM5. Component of the CMG helicase complex, a hexameric ring of related MCM2-7 subunits stabilized by CDC45 and the tetrameric GINS complex. Associated with the replication-specific DNA polymerase alpha. Interacts with MCMBP. Interacts with ANKRD17. Interacts with MCM3AP isoform MCM3AP; this interaction leads to MCM3 acetylation. Post-translationally, acetylated by MCM3AP. O-glycosylated (O-GlcNAcylated), in a cell cycle-dependent manner.

The protein resides in the nucleus. It is found in the chromosome. The enzyme catalyses ATP + H2O = ADP + phosphate + H(+). Acts as a component of the MCM2-7 complex (MCM complex) which is the replicative helicase essential for 'once per cell cycle' DNA replication initiation and elongation in eukaryotic cells. Core component of CDC45-MCM-GINS (CMG) helicase, the molecular machine that unwinds template DNA during replication, and around which the replisome is built. The active ATPase sites in the MCM2-7 ring are formed through the interaction surfaces of two neighboring subunits such that a critical structure of a conserved arginine finger motif is provided in trans relative to the ATP-binding site of the Walker A box of the adjacent subunit. The six ATPase active sites, however, are likely to contribute differentially to the complex helicase activity. Required for the entry in S phase and for cell division. In Bos taurus (Bovine), this protein is DNA replication licensing factor MCM3 (MCM3).